Reading from the N-terminus, the 738-residue chain is Glycogen [starch] synthase, muscle (738 aa).

Phosphoserine; by AMPK and PKA is present on Ser8. Ser11 is subject to Phosphoserine. Position 39 (Lys39) interacts with UDP. The UDP-alpha-D-glucose site is built by His205 and Arg211. Residues His291, Glu292, Gln294, His297, and Lys301 each contribute to the alpha-D-glucose 6-phosphate site. A UDP-binding site is contributed by Arg331. A UDP-alpha-D-glucose-binding site is contributed by Arg331. At Ser412 the chain carries Phosphoserine. Residue His501 participates in alpha-D-glucose 6-phosphate binding. Glu510, Trp512, and Gly513 together coordinate UDP-alpha-D-glucose. Residue Thr515 coordinates UDP. Positions 582 and 586 each coordinate alpha-D-glucose 6-phosphate. A disordered region spans residues 632 to 738; that stretch reads QGYRYPRPAS…PTSSLGEERN (107 aa). A phosphoserine mark is found at Ser641 and Ser645. Ser649 is modified (phosphoserine; by GSK3-alpha and GSK3-beta). 4 positions are modified to phosphoserine: Ser652, Ser653, Ser657, and Ser672. Positions 682–695 are enriched in basic and acidic residues; that stretch reads AKDRRNIRAPEWPR. Residues Ser698, Ser709, and Ser711 each carry the phosphoserine modification. Positions 698–738 are enriched in low complexity; that stretch reads SCSSSTGGSKRSNSVDTGPSSSLSTPTEPLSPTSSLGEERN. Thr722 carries the post-translational modification Phosphothreonine. Phosphoserine is present on residues Ser728 and Ser732.

This sequence belongs to the glycosyltransferase 3 family. As to quaternary structure, part of the GYS1-GYG1 complex, a heterooctamer composed of a tetramer of GYS1 and 2 dimers of GYG1, where each GYS1 protomer binds to one GYG1 subunit (via GYG1 C-terminus); the GYS1 tetramer may dissociate from GYG1 dimers to continue glycogen polymerization on its own. Post-translationally, phosphorylation at Ser-8 by AMPK inactivates the enzyme activity. Primed phosphorylation at Ser-657 (site 5) by CSNK2A1 and CSNK2A2 is required for inhibitory phosphorylation at Ser-641 (site 3a), Ser-645 (site 3b), Ser-649 (site 3c) and Ser-653 (site 4) by GSK3A an GSK3B. Phosphorylated at Ser-641 by PASK, leading to inactivation; phosphorylation by PASK is inhibited by glycogen. Phosphorylated at Ser-641 by DYRK2, leading to inactivation. Dephosphorylation at Ser-641 and Ser-645 by PP1 activates the enzyme.

It catalyses the reaction [(1-&gt;4)-alpha-D-glucosyl](n) + UDP-alpha-D-glucose = [(1-&gt;4)-alpha-D-glucosyl](n+1) + UDP + H(+). The protein operates within glycan biosynthesis; glycogen biosynthesis. Allosteric activation by glucose-6-phosphate. Phosphorylation reduces the activity towards UDP-glucose. When in the non-phosphorylated state, glycogen synthase does not require glucose-6-phosphate as an allosteric activator; when phosphorylated it does. In terms of biological role, glycogen synthase participates in the glycogen biosynthetic process along with glycogenin and glycogen branching enzyme. Extends the primer composed of a few glucose units formed by glycogenin by adding new glucose units to it. In this context, glycogen synthase transfers the glycosyl residue from UDP-Glc to the non-reducing end of alpha-1,4-glucan. In Rattus norvegicus (Rat), this protein is Glycogen [starch] synthase, muscle (Gys1).